Here is a 224-residue protein sequence, read N- to C-terminus: UPF0758 protein Mmwyl1_0624 (224 aa).

Positions 102 to 224 (VFASAEHVRT…PVSLAERGLV (123 aa)) constitute an MPN domain. Positions 173, 175, and 186 each coordinate Zn(2+). A JAMM motif motif is present at residues 173-186 (HNHPSGIAEPSQAD).

It belongs to the UPF0758 family.

The sequence is that of UPF0758 protein Mmwyl1_0624 from Marinomonas sp. (strain MWYL1).